Here is a 159-residue protein sequence, read N- to C-terminus: Small ribosomal subunit protein uS19 (159 aa).

Belongs to the universal ribosomal protein uS19 family.

Its function is as follows. Protein S19 forms a complex with S13 that binds strongly to the 16S ribosomal RNA. The polypeptide is Small ribosomal subunit protein uS19 (Pyrobaculum arsenaticum (strain DSM 13514 / JCM 11321 / PZ6)).